Here is a 146-residue protein sequence, read N- to C-terminus: Large ribosomal subunit protein bL9 (146 aa).

Belongs to the bacterial ribosomal protein bL9 family.

Binds to the 23S rRNA. The polypeptide is Large ribosomal subunit protein bL9 (Symbiobacterium thermophilum (strain DSM 24528 / JCM 14929 / IAM 14863 / T)).